The sequence spans 954 residues: Glycine dehydrogenase (decarboxylating) (954 aa).

An N6-(pyridoxal phosphate)lysine modification is found at Lys-700.

It belongs to the GcvP family. As to quaternary structure, the glycine cleavage system is composed of four proteins: P, T, L and H. Requires pyridoxal 5'-phosphate as cofactor.

The catalysed reaction is N(6)-[(R)-lipoyl]-L-lysyl-[glycine-cleavage complex H protein] + glycine + H(+) = N(6)-[(R)-S(8)-aminomethyldihydrolipoyl]-L-lysyl-[glycine-cleavage complex H protein] + CO2. Its function is as follows. The glycine cleavage system catalyzes the degradation of glycine. The P protein binds the alpha-amino group of glycine through its pyridoxal phosphate cofactor; CO(2) is released and the remaining methylamine moiety is then transferred to the lipoamide cofactor of the H protein. This Dinoroseobacter shibae (strain DSM 16493 / NCIMB 14021 / DFL 12) protein is Glycine dehydrogenase (decarboxylating).